Reading from the N-terminus, the 467-residue chain is tRNA-2-methylthio-N(6)-dimethylallyladenosine synthase (467 aa).

The disordered stretch occupies residues 1-20; it reads MSDDTTQIEPAMAQETSPRA. The MTTase N-terminal domain maps to 23–143; that stretch reads RKVFVKTYGC…LPNALARVRG (121 aa). Positions 32, 68, 106, 184, 188, and 191 each coordinate [4Fe-4S] cluster. The Radical SAM core domain maps to 170–402; that stretch reads RKRGVSAFLT…QALLSAQQYA (233 aa). Positions 405–467 constitute a TRAM domain; the sequence is DSMIGRKMDV…TNSLIAQKLA (63 aa).

This sequence belongs to the methylthiotransferase family. MiaB subfamily. In terms of assembly, monomer. [4Fe-4S] cluster serves as cofactor.

It localises to the cytoplasm. The catalysed reaction is N(6)-dimethylallyladenosine(37) in tRNA + (sulfur carrier)-SH + AH2 + 2 S-adenosyl-L-methionine = 2-methylsulfanyl-N(6)-dimethylallyladenosine(37) in tRNA + (sulfur carrier)-H + 5'-deoxyadenosine + L-methionine + A + S-adenosyl-L-homocysteine + 2 H(+). Catalyzes the methylthiolation of N6-(dimethylallyl)adenosine (i(6)A), leading to the formation of 2-methylthio-N6-(dimethylallyl)adenosine (ms(2)i(6)A) at position 37 in tRNAs that read codons beginning with uridine. In Brucella abortus (strain S19), this protein is tRNA-2-methylthio-N(6)-dimethylallyladenosine synthase.